We begin with the raw amino-acid sequence, 134 residues long: ATP synthase epsilon chain, plastid (134 aa).

The protein belongs to the ATPase epsilon chain family. As to quaternary structure, F-type ATPases have 2 components, CF(1) - the catalytic core - and CF(0) - the membrane proton channel. CF(1) has five subunits: alpha(3), beta(3), gamma(1), delta(1), epsilon(1). CF(0) has three main subunits: a, b and c.

It localises to the plastid membrane. Produces ATP from ADP in the presence of a proton gradient across the membrane. This Prototheca wickerhamii protein is ATP synthase epsilon chain, plastid.